Consider the following 84-residue polypeptide: uncharacterized protein (84 aa).

The interval Cys-8–Cys-47 is cysteine motif.

This is an uncharacterized protein from Rhizobium meliloti (strain 1021) (Ensifer meliloti).